Consider the following 515-residue polypeptide: Galactose/methyl galactoside import ATP-binding protein MglA (515 aa).

2 consecutive ABC transporter domains span residues 8–243 and 254–499; these read LEMR…VGRE and IPKE…AKYL. 40–47 provides a ligand contact to ATP; the sequence is GENGAGKS.

The protein belongs to the ABC transporter superfamily. Galactose/methyl galactoside importer (TC 3.A.1.2.3) family. In terms of assembly, the complex is composed of one ATP-binding protein (MglA), two transmembrane proteins (MglC) and a solute-binding protein (MglB).

The protein resides in the cell membrane. It catalyses the reaction D-galactose(out) + ATP + H2O = D-galactose(in) + ADP + phosphate + H(+). The catalysed reaction is methyl beta-D-galactoside(out) + ATP + H2O = methyl beta-D-galactoside(in) + ADP + phosphate + H(+). Part of the ABC transporter complex MglABC involved in galactose/methyl galactoside import. Responsible for energy coupling to the transport system. This Clostridium perfringens (strain ATCC 13124 / DSM 756 / JCM 1290 / NCIMB 6125 / NCTC 8237 / Type A) protein is Galactose/methyl galactoside import ATP-binding protein MglA.